The primary structure comprises 37 residues: Translationally-controlled tumor protein homolog (37 aa).

In terms of domain architecture, TCTP spans 1-37 (MKIFRDILTNAEVVXDNDKPMDVLDEIVYAXQGRYIE).

The protein belongs to the TCTP family. As to quaternary structure, monomer.

The protein resides in the cytoplasm. Its function is as follows. Binds calcium; exact function not known. The polypeptide is Translationally-controlled tumor protein homolog (Trypanosoma brucei brucei).